Here is a 180-residue protein sequence, read N- to C-terminus: UPF0227 protein YcfP (180 aa).

Belongs to the UPF0227 family.

The protein is UPF0227 protein YcfP of Salmonella gallinarum (strain 287/91 / NCTC 13346).